The sequence spans 285 residues: Glycine--tRNA ligase alpha subunit (285 aa).

Belongs to the class-II aminoacyl-tRNA synthetase family. As to quaternary structure, tetramer of two alpha and two beta subunits.

Its subcellular location is the cytoplasm. The catalysed reaction is tRNA(Gly) + glycine + ATP = glycyl-tRNA(Gly) + AMP + diphosphate. The chain is Glycine--tRNA ligase alpha subunit from Granulibacter bethesdensis (strain ATCC BAA-1260 / CGDNIH1).